The following is a 152-amino-acid chain: MTHIIIDGDACPVVDSIIDLTTETGIFVTIIRSFSHFSNQLYPPHVSTLYVDDGPDAVDYKIVQLSTKDDIVITQDYGLASLLVDKVLIVMHHNGKIYNSKNIQQLLDKRYMNAQIRKQGGRHKGPPPFTKQDQKVFEQSLLKVIHRIKELD.

Belongs to the UPF0178 family.

This is UPF0178 protein SAB0630c from Staphylococcus aureus (strain bovine RF122 / ET3-1).